The sequence spans 635 residues: Protein NSP-INTERACTING KINASE 2 (635 aa).

The first 32 residues, 1–32 (MLQGRREAKKSYALFSSTFFFFFICFLSSSSA), serve as a signal peptide directing secretion. Residues 33–248 (ELTDKGVNFE…DGGTKNRKIA (216 aa)) are Extracellular-facing. Asn92 and Asn103 each carry an N-linked (GlcNAc...) asparagine glycan. LRR repeat units follow at residues 104-128 (LTNL…IGKL), 129-153 (MKLK…SYSK), 155-176 (LQYL…LANM), and 177-200 (TQLT…LAKT). Residues Asn140, Asn162, Asn175, Asn188, Asn219, Asn231, and Asn235 are each glycosylated (N-linked (GlcNAc...) asparagine). Residues 214-242 (TEKDCNGTQPKPMSITLNSSQNKSSDGGT) form a disordered region. Polar residues predominate over residues 219 to 241 (NGTQPKPMSITLNSSQNKSSDGG). Residues 249–269 (VVFGVSLTCVCLLIIGFGFLL) form a helical membrane-spanning segment. Over 270-635 (WWRRRHNKQV…VQAMELSGPR (366 aa)) the chain is Cytoplasmic. Thr309 carries the post-translational modification Phosphothreonine. A Protein kinase domain is found at 312–591 (FSSKNLVGKG…EGDGLVEKWE (280 aa)). Residues 318-326 (VGKGGFGNV) and Lys340 each bind ATP. A phosphoserine mark is found at Ser393 and Ser396. Position 408 is a phosphothreonine (Thr408). Residues 422–502 (YLHEQCDPKI…DVFGFGILLL (81 aa)) form an interaction with geminivirus NSP protein region. Residue Asp435 is the Proton acceptor of the active site. Phosphothreonine occurs at positions 468, 469, and 474. The residue at position 482 (Tyr482) is a Phosphotyrosine. Phosphoserine is present on Ser484. Phosphothreonine is present on Thr485. Ser489 bears the Phosphoserine mark. At Thr564 the chain carries Phosphothreonine. The segment covering 593–613 (SSQRAETNRSYSKPNEFSSSE) has biased composition (polar residues). Positions 593–621 (SSQRAETNRSYSKPNEFSSSERYSDLTDD) are disordered.

Belongs to the protein kinase superfamily. Ser/Thr protein kinase family. As to quaternary structure, oligomer. Interacts with geminivirus nuclear shuttle protein (NSP). Autophosphorylated. Expressed in flowers and roots.

It is found in the cell membrane. The enzyme catalyses L-seryl-[protein] + ATP = O-phospho-L-seryl-[protein] + ADP + H(+). The catalysed reaction is L-threonyl-[protein] + ATP = O-phospho-L-threonyl-[protein] + ADP + H(+). Its activity is regulated as follows. Inhibited by the viral nuclear shuttle protein (NSP) that binds to the region required for oligomerization. Involved in defense response to geminivirus infection. Phosphorylates RPL10A in vitro. This Arabidopsis thaliana (Mouse-ear cress) protein is Protein NSP-INTERACTING KINASE 2 (NIK2).